Reading from the N-terminus, the 191-residue chain is Potassium-transporting ATPase KdpC subunit (191 aa).

Residues 8–28 (LFLFLLLLLVTGLAYPLLTTV) traverse the membrane as a helical segment.

It belongs to the KdpC family. The system is composed of three essential subunits: KdpA, KdpB and KdpC.

The protein localises to the cell inner membrane. In terms of biological role, part of the high-affinity ATP-driven potassium transport (or Kdp) system, which catalyzes the hydrolysis of ATP coupled with the electrogenic transport of potassium into the cytoplasm. This subunit acts as a catalytic chaperone that increases the ATP-binding affinity of the ATP-hydrolyzing subunit KdpB by the formation of a transient KdpB/KdpC/ATP ternary complex. The sequence is that of Potassium-transporting ATPase KdpC subunit from Pectobacterium atrosepticum (strain SCRI 1043 / ATCC BAA-672) (Erwinia carotovora subsp. atroseptica).